A 134-amino-acid chain; its full sequence is Profilin-1 (134 aa).

An intrachain disulfide couples Cys-13 to Cys-118. Residues 84–100 (AVIRGKKGSGGITIKKT) carry the Involved in PIP2 interaction motif. Position 114 is a phosphothreonine (Thr-114).

Belongs to the profilin family. As to quaternary structure, occurs in many kinds of cells as a complex with monomeric actin in a 1:1 ratio. Post-translationally, phosphorylated by MAP kinases.

It localises to the cytoplasm. The protein resides in the cytoskeleton. Binds to actin and affects the structure of the cytoskeleton. At high concentrations, profilin prevents the polymerization of actin, whereas it enhances it at low concentrations. This chain is Profilin-1, found in Olea europaea (Common olive).